Reading from the N-terminus, the 152-residue chain is 3-hydroxyacyl-[acyl-carrier-protein] dehydratase FabZ (152 aa).

The active site involves His-58.

This sequence belongs to the thioester dehydratase family. FabZ subfamily.

It is found in the cytoplasm. The enzyme catalyses a (3R)-hydroxyacyl-[ACP] = a (2E)-enoyl-[ACP] + H2O. Involved in unsaturated fatty acids biosynthesis. Catalyzes the dehydration of short chain beta-hydroxyacyl-ACPs and long chain saturated and unsaturated beta-hydroxyacyl-ACPs. The sequence is that of 3-hydroxyacyl-[acyl-carrier-protein] dehydratase FabZ from Prochlorococcus marinus (strain MIT 9301).